The following is a 33-amino-acid chain: Suppressor protein HFN40 (33 aa).

Suppresses expansion of husk leaf blades. This chain is Suppressor protein HFN40, found in Zea mays (Maize).